The following is a 290-amino-acid chain: Acetylglutamate kinase (290 aa).

Residues 60-61, arginine 82, and asparagine 185 contribute to the substrate site; that span reads GG.

This sequence belongs to the acetylglutamate kinase family. ArgB subfamily.

The protein resides in the cytoplasm. The catalysed reaction is N-acetyl-L-glutamate + ATP = N-acetyl-L-glutamyl 5-phosphate + ADP. The protein operates within amino-acid biosynthesis; L-arginine biosynthesis; N(2)-acetyl-L-ornithine from L-glutamate: step 2/4. In terms of biological role, catalyzes the ATP-dependent phosphorylation of N-acetyl-L-glutamate. In Archaeoglobus fulgidus (strain ATCC 49558 / DSM 4304 / JCM 9628 / NBRC 100126 / VC-16), this protein is Acetylglutamate kinase.